Reading from the N-terminus, the 357-residue chain is Carbamoyl phosphate synthase small chain (357 aa).

Residues 1 to 168 (MSKRLLILED…STATAYPSPN (168 aa)) form a CPSase region. L-glutamine-binding residues include Ser-46, Gly-220, and Gly-222. Residues 172–357 (KVVVVDFGLK…FMDLMDNFKK (186 aa)) form the Glutamine amidotransferase type-1 domain. The active-site Nucleophile is Cys-247. Residues Leu-248, Gln-251, Asn-289, Gly-291, and Tyr-292 each contribute to the L-glutamine site. Active-site residues include His-331 and Asp-333.

Belongs to the CarA family. In terms of assembly, composed of two chains; the small (or glutamine) chain promotes the hydrolysis of glutamine to ammonia, which is used by the large (or ammonia) chain to synthesize carbamoyl phosphate. Tetramer of heterodimers (alpha,beta)4.

The catalysed reaction is hydrogencarbonate + L-glutamine + 2 ATP + H2O = carbamoyl phosphate + L-glutamate + 2 ADP + phosphate + 2 H(+). It carries out the reaction L-glutamine + H2O = L-glutamate + NH4(+). It participates in amino-acid biosynthesis; L-arginine biosynthesis; carbamoyl phosphate from bicarbonate: step 1/1. It functions in the pathway pyrimidine metabolism; UMP biosynthesis via de novo pathway; (S)-dihydroorotate from bicarbonate: step 1/3. In terms of biological role, small subunit of the glutamine-dependent carbamoyl phosphate synthetase (CPSase). CPSase catalyzes the formation of carbamoyl phosphate from the ammonia moiety of glutamine, carbonate, and phosphate donated by ATP, constituting the first step of 2 biosynthetic pathways, one leading to arginine and/or urea and the other to pyrimidine nucleotides. The small subunit (glutamine amidotransferase) binds and cleaves glutamine to supply the large subunit with the substrate ammonia. This is Carbamoyl phosphate synthase small chain from Lactococcus lactis subsp. cremoris (strain MG1363).